A 563-amino-acid chain; its full sequence is Germacrene C/D synthase (563 aa).

The interval methionine 1–arginine 22 is disordered. Mg(2+) is bound by residues aspartate 315, aspartate 319, and glutamate 468. A DDXXD motif motif is present at residues aspartate 315–aspartate 319.

The protein belongs to the terpene synthase family. Mg(2+) serves as cofactor. As to expression, predominantly expressed in root.

The enzyme catalyses (2E,6E)-farnesyl diphosphate = germacrene C + diphosphate. The catalysed reaction is (2E,6E)-farnesyl diphosphate = (-)-germacrene D + diphosphate. In terms of biological role, mediates formation of germacrene C and germacrene D using farnesyl diphosphate as substrate. Can also catalyze formation of trace of germacrene B. This is Germacrene C/D synthase (TPS1) from Valeriana officinalis (Valerian).